We begin with the raw amino-acid sequence, 356 residues long: MIRISIDAMGGDHGPAVVIPALMTVATRRPDIRFVIYGREELVRPELAKFPKLAEVSEFFHCEIAVRMDDKPSQALRHGRWKSSMWKAVEAVKSGAADACISAGNTGALMAMSKFCLRTMATIDRPAIAALWPTLRGESVVLDVGATIGADAHQLIDFAILGTGMARSVFGVARPTVGLLNVGVEEIKGQEEVKEAGRMLREANMASMNYHGFVEGDDIGKGTVDVVVTEGFAGNIALKTAEGTARQIAGYLRAAMSRTLMAKIGYVFAKSAFDRLREKMDVGRSNGGVFLGLNGIVVKSHGGADSDGFAAAIELGYDMVRNNLLDRIEADLDLFHARNPHALSSRKSDVVTDAKE.

Belongs to the PlsX family. As to quaternary structure, homodimer. Probably interacts with PlsY.

The protein localises to the cytoplasm. The catalysed reaction is a fatty acyl-[ACP] + phosphate = an acyl phosphate + holo-[ACP]. It functions in the pathway lipid metabolism; phospholipid metabolism. In terms of biological role, catalyzes the reversible formation of acyl-phosphate (acyl-PO(4)) from acyl-[acyl-carrier-protein] (acyl-ACP). This enzyme utilizes acyl-ACP as fatty acyl donor, but not acyl-CoA. The chain is Phosphate acyltransferase from Mesorhizobium japonicum (strain LMG 29417 / CECT 9101 / MAFF 303099) (Mesorhizobium loti (strain MAFF 303099)).